The chain runs to 396 residues: Putative pyridoxal phosphate-dependent acyltransferase (396 aa).

111-112 (GF) is a binding site for pyridoxal 5'-phosphate. Residue His-136 coordinates substrate. Residues Ser-186, 211–214 (DDAH), and 241–244 (TLSK) contribute to the pyridoxal 5'-phosphate site. N6-(pyridoxal phosphate)lysine is present on Lys-244. A substrate-binding site is contributed by Thr-358.

This sequence belongs to the class-II pyridoxal-phosphate-dependent aminotransferase family. As to quaternary structure, homodimer. Pyridoxal 5'-phosphate serves as cofactor.

This chain is Putative pyridoxal phosphate-dependent acyltransferase, found in Bacillus anthracis.